The following is a 247-amino-acid chain: Uridylate kinase (247 aa).

19 to 22 contacts ATP; the sequence is KISG. Glycine 61 is a UMP binding site. Positions 62 and 66 each coordinate ATP. UMP-binding positions include aspartate 81 and 142 to 149; that span reads TGNPFFTT. The ATP site is built by threonine 169, glutamine 170, tyrosine 175, and aspartate 178.

This sequence belongs to the UMP kinase family. In terms of assembly, homohexamer.

The protein localises to the cytoplasm. It catalyses the reaction UMP + ATP = UDP + ADP. It functions in the pathway pyrimidine metabolism; CTP biosynthesis via de novo pathway; UDP from UMP (UMPK route): step 1/1. Inhibited by UTP. In terms of biological role, catalyzes the reversible phosphorylation of UMP to UDP. The chain is Uridylate kinase from Wolbachia pipientis wMel.